The chain runs to 450 residues: Plasmepsin VII (450 aa).

An N-terminal signal peptide occupies residues 1 to 24 (MNKNIIQIYLFVFILLLKQHIVIL). The region spanning 92-441 (YYGEVQIGEQ…DKDNLKIGFV (350 aa)) is the Peptidase A1 domain. Residues D111 and D324 contribute to the active site.

It belongs to the peptidase A1 family.

The protein resides in the cytoplasm. The sequence is that of Plasmepsin VII from Plasmodium falciparum (isolate NF54).